Consider the following 394-residue polypeptide: Potassium channel subfamily K member 3 (394 aa).

Residues 1 to 8 lie on the Cytoplasmic side of the membrane; that stretch reads MKRQNVRT. The chain crosses the membrane as a helical span at residues 9-29; the sequence is LALIVCTFTYLLVGAAVFDAL. Residue Asn-53 is glycosylated (N-linked (GlcNAc...) asparagine). An intramembrane region (pore-forming) is located at residues 78-101; sequence WRFAGSFYFAITVITTIGYGHAAP. 4 residues coordinate K(+): Thr-93, Ile-94, Gly-95, and Tyr-96. Residues 93–98 are selectivity filter 1; the sequence is TIGYGH. Residues 108-128 form a helical membrane-spanning segment; the sequence is VFCMFYALLGIPLTLVMFQSL. At 129-158 the chain is on the cytoplasmic side; that stretch reads GERINTLVRYLLHRAKKGLGMRRADVSMAN. The helical transmembrane segment at 159 to 179 threads the bilayer; sequence MVLIGFFSCISTLCIGAAAFS. An intramembrane region (pore-forming) is located at residues 184–207; the sequence is WTFFQAYYYCFITLTTIGFGDYVA. K(+)-binding residues include Thr-199, Ile-200, Gly-201, and Phe-202. Positions 199–204 are selectivity filter 2; the sequence is TIGFGD. Residues 223–243 traverse the membrane as a helical segment; sequence FSFVYILTGLTVIGAFLNLVV. Positions 243–248 are X-gate; it reads VLRFMT. Over 244–394 the chain is Cytoplasmic; it reads LRFMTMNAED…RGLMKRRSSV (151 aa). Disordered regions lie at residues 266–286 and 338–357; these read RNGQAGGGGGGGSAHTTDTAS and TCVEQSHSSPGGGGRYSDTP. Over residues 269–278 the composition is skewed to gly residues; it reads QAGGGGGGGS.

Belongs to the two pore domain potassium channel (TC 1.A.1.8) family. In terms of assembly, homodimer. Heterodimer with KCNK1. Heterodimer with KCNK9. Widespread expression in adult. Strongest expression in pancreas and placenta. Lower expression in brain, lung, prostate, heart, kidney, uterus, small intestine and colon.

It is found in the cell membrane. The catalysed reaction is K(+)(in) = K(+)(out). It catalyses the reaction Na(+)(in) = Na(+)(out). With respect to regulation, inhibited by external acidification, diacylglycerol and anandamide. Activated by halothane and isoflurane. Functionally, k(+) channel that conducts voltage-dependent outward rectifying currents upon membrane depolarization. Voltage sensing is coupled to K(+) electrochemical gradient in an 'ion flux gating' mode where outward but not inward ion flow opens the gate. Changes ion selectivity and becomes permeable to Na(+) ions in response to extracellular acidification. Protonation of the pH sensor His-98 stabilizes C-type inactivation conformation likely converting the channel from outward K(+)-conducting, to inward Na(+)-conducting to nonconductive state. Homo- and heterodimerizes to form functional channels with distinct regulatory and gating properties. Allows K(+) currents with fast-gating kinetics important for the repolarization and hyperpolarization phases of action potentials. In cerebellar granule cells, heteromeric KCNK3:KCNK9 channel may hyperpolarize the resting membrane potential to limit intrinsic neuronal excitability, but once the action potential threshold is reached, it may support high-frequency action potential firing and increased neuronal excitability. Dispensable for central chemosensory respiration i.e. breathing controlled by brainstem CO2/pH, it rather conducts pH-sensitive currents and controls the firing rate of serotonergic raphe neurons involved in potentiation of the respiratory chemoreflex. Additionally, imparts chemosensitivity to type 1 cells in carotid bodies which respond to a decrease in arterial oxygen pressure or an increase in carbon dioxide pressure or pH to initiate adaptive changes in pulmonary ventilation. In adrenal gland, contributes to the maintenance of a hyperpolarized resting membrane potential of aldosterone-producing cells at zona glomerulosa and limits aldosterone release as part of a regulatory mechanism that controls arterial blood pressure and electrolyte homeostasis. In brown adipocytes, mediates K(+) efflux that counteracts norepinephrine-induced membrane depolarization, limits Ca(2+) efflux and downstream cAMP and PKA signaling, ultimately attenuating lipid oxidation and adaptive thermogenesis. The chain is Potassium channel subfamily K member 3 from Homo sapiens (Human).